Consider the following 57-residue polypeptide: Aminopeptidase A (57 aa).

Residues 1 to 57 lie on the Extracellular side of the membrane; the sequence is YLTDHYFKVDLNSTVTQQRFLLDPSELAGITIMQPSDSNIEWLKQYRDDVATWLENS. A glycan (N-linked (GlcNAc...) asparagine) is linked at Asn-12.

It belongs to the peptidase M1 family. Homodimer; disulfide-linked. It depends on Zn(2+) as a cofactor.

The protein localises to the cell membrane. The catalysed reaction is Release of N-terminal glutamate (and to a lesser extent aspartate) from a peptide.. With respect to regulation, inhibited by the aminopeptidase competitive inhibitors amastatin (Leu and acidic inhibitor), and bestatin (Leu inhibitor), by chelating agents EDTA, and 1,10-Phenanthroline, as well as by Zn(2+) ions. Substrate specificity is modulated by Ca(2+), Ba(2+), and Mn(2+) ions which enhances the enzymatic activity for cleavage of acidic residues. Venom protein that cleaves N-terminal acidic residues from peptides with high potency in presence of calcium. It may have several roles in venom including alteration of blood pressure by cleaving circulating angiotensin-2, general degradation of host tissue, increase of permeability to other venom components, and/or processing of other toxins in the venom. In Gloydius blomhoffii (Mamushi), this protein is Aminopeptidase A.